Consider the following 507-residue polypeptide: Glycerol kinase (507 aa).

Threonine 13 lines the ADP pocket. The ATP site is built by threonine 13, threonine 14, and serine 15. Threonine 13 is a sn-glycerol 3-phosphate binding site. Arginine 17 serves as a coordination point for ADP. 4 residues coordinate sn-glycerol 3-phosphate: arginine 83, glutamate 84, tyrosine 135, and aspartate 245. Positions 83, 84, 135, 245, and 246 each coordinate glycerol. ADP contacts are provided by threonine 267 and glycine 310. Positions 267, 310, 314, and 411 each coordinate ATP. The ADP site is built by glycine 411 and asparagine 415.

This sequence belongs to the FGGY kinase family.

It carries out the reaction glycerol + ATP = sn-glycerol 3-phosphate + ADP + H(+). It functions in the pathway polyol metabolism; glycerol degradation via glycerol kinase pathway; sn-glycerol 3-phosphate from glycerol: step 1/1. With respect to regulation, inhibited by fructose 1,6-bisphosphate (FBP). Key enzyme in the regulation of glycerol uptake and metabolism. Catalyzes the phosphorylation of glycerol to yield sn-glycerol 3-phosphate. The sequence is that of Glycerol kinase from Halorhodospira halophila (strain DSM 244 / SL1) (Ectothiorhodospira halophila (strain DSM 244 / SL1)).